A 714-amino-acid chain; its full sequence is Ribonucleoside-diphosphate reductase 2 subunit alpha (714 aa).

Substrate-binding positions include Thr-161, 177–178, Gly-206, 386–390, and 588–592; these read SC, NLCSE, and PTGSI. A disulfide bridge links Cys-178 with Cys-415. Asn-386 (proton acceptor) is an active-site residue. Cys-388 acts as the Cysteine radical intermediate in catalysis. Glu-390 (proton acceptor) is an active-site residue.

Belongs to the ribonucleoside diphosphate reductase large chain family. In terms of assembly, tetramer of two alpha and two beta subunits.

It carries out the reaction a 2'-deoxyribonucleoside 5'-diphosphate + [thioredoxin]-disulfide + H2O = a ribonucleoside 5'-diphosphate + [thioredoxin]-dithiol. With respect to regulation, under complex allosteric control mediated by deoxynucleoside triphosphates and ATP binding. The type of nucleotide bound at the specificity site determines substrate preference. It seems probable that ATP makes the enzyme reduce CDP and UDP, dGTP favors ADP reduction and dTTP favors GDP reduction. Lacks the N-terminal activity site. Its function is as follows. Provides the precursors necessary for DNA synthesis. Catalyzes the biosynthesis of deoxyribonucleotides from the corresponding ribonucleotides. R1E contains the binding sites for both substrates and allosteric effectors and carries out the actual reduction of the ribonucleotide. This Salmonella typhimurium (strain LT2 / SGSC1412 / ATCC 700720) protein is Ribonucleoside-diphosphate reductase 2 subunit alpha (nrdE).